Here is a 335-residue protein sequence, read N- to C-terminus: DNA-directed RNA polymerase RPB7 homolog (335 aa).

The protein belongs to the Asfivirus DNA-directed RNA polymerase RPB7 homolog family. As to quaternary structure, part of the viral DNA-directed RNA polymerase that consists of 8 polII-like subunits (RPB1, RPB2, RPB3, RPB5, RPB6, RPB7, RPB9, RPB10), a capping enzyme and a termination factor.

It is found in the host cytoplasm. It localises to the virion. Component of the DNA-directed RNA polymerase (RNAP) that catalyzes the transcription in the cytoplasm of viral DNA into RNA using the four ribonucleoside triphosphates as substrates. The sequence is that of DNA-directed RNA polymerase RPB7 homolog from African swine fever virus (isolate Pig/Kenya/KEN-50/1950) (ASFV).